The following is a 409-amino-acid chain: Elongation factor Tu, chloroplastic (409 aa).

In terms of domain architecture, tr-type G spans 10 to 214 (KPHINIGTIG…AVDAYIPTPE (205 aa)). The interval 19 to 26 (GHVDHGKT) is G1. GTP is bound at residue 19-26 (GHVDHGKT). Thr26 is a binding site for Mg(2+). Residues 60 to 64 (GITIN) are G2. The G3 stretch occupies residues 81–84 (DCPG). GTP-binding positions include 81 to 85 (DCPGH) and 136 to 139 (NKQD). The interval 136 to 139 (NKQD) is G4. Residues 174–176 (SRL) form a G5 region.

The protein belongs to the TRAFAC class translation factor GTPase superfamily. Classic translation factor GTPase family. EF-Tu/EF-1A subfamily.

It is found in the plastid. The protein localises to the chloroplast. The catalysed reaction is GTP + H2O = GDP + phosphate + H(+). Its function is as follows. GTP hydrolase that promotes the GTP-dependent binding of aminoacyl-tRNA to the A-site of ribosomes during protein biosynthesis. The protein is Elongation factor Tu, chloroplastic (tufA) of Stephanocyclus meneghinianus (Diatom).